We begin with the raw amino-acid sequence, 345 residues long: NADH-quinone oxidoreductase subunit H (345 aa).

8 helical membrane passes run 15–35, 82–102, 115–135, 161–181, 190–210, 240–262, 278–298, and 309–329; these read MLLQ…FMVY, FVYF…FVVI, VGIL…IMGG, LGLI…TAIV, LLNW…VSAL, YLLF…SLLF, WWMV…KAIV, and IGWK…AILA.

The protein belongs to the complex I subunit 1 family. NDH-1 is composed of at least 14 different subunits, Nqo1 to Nqo14. The complex has a L-shaped structure, with the hydrophobic arm (subunits Nqo7, Nqo8, Nqo10 to Nqo14) embedded in the inner membrane and the hydrophilic peripheral arm (subunits Nqo1 to Nqo6, Nqo9) protruding into the bacterial cytoplasm. The hydrophilic domain contains all the redox centers. NADH-quinone oxidoreductase forms a supercomplex with ubiquinol-cytochrome c reductase complex (complex III or cytochrome b-c1 complex) and cytochrome c oxidase (complex IV), which stabilizes the NADH-quinone oxidoreductase complex.

It is found in the cell inner membrane. The catalysed reaction is a quinone + NADH + 5 H(+)(in) = a quinol + NAD(+) + 4 H(+)(out). In terms of biological role, NDH-1 shuttles electrons from NADH, via FMN and iron-sulfur (Fe-S) centers, to quinones in the respiratory chain. The immediate electron acceptor for the enzyme in this species is believed to be ubiquinone. Couples the redox reaction to proton translocation (for every two electrons transferred, four hydrogen ions are translocated across the cytoplasmic membrane), and thus conserves the redox energy in a proton gradient. This subunit may bind ubiquinone. The chain is NADH-quinone oxidoreductase subunit H from Paracoccus denitrificans (strain Pd 1222).